We begin with the raw amino-acid sequence, 75 residues long: Cytochrome c oxidase subunit 6C (75 aa).

The Mitochondrial matrix segment spans residues 1 to 13; the sequence is MASEVLAKPQMRG. The helical transmembrane segment at 14–54 threads the bilayer; sequence LLARRLRIHMVGAFLISLGVAALYKFGVAEPRKKAYADFYK. Over 55 to 75 the chain is Mitochondrial intermembrane; the sequence is NYSPEKDFEEMKKAGVFRSIK.

The protein belongs to the cytochrome c oxidase subunit 6c family. As to quaternary structure, component of the cytochrome c oxidase (complex IV, CIV), a multisubunit enzyme composed of 14 subunits. The complex is composed of a catalytic core of 3 subunits MT-CO1, MT-CO2 and MT-CO3, encoded in the mitochondrial DNA, and 11 supernumerary subunits COX4I, COX5A, COX5B, COX6A, COX6B, COX6C, COX7A, COX7B, COX7C, COX8 and NDUFA4, which are encoded in the nuclear genome. The complex exists as a monomer or a dimer and forms supercomplexes (SCs) in the inner mitochondrial membrane with NADH-ubiquinone oxidoreductase (complex I, CI) and ubiquinol-cytochrome c oxidoreductase (cytochrome b-c1 complex, complex III, CIII), resulting in different assemblies (supercomplex SCI(1)III(2)IV(1) and megacomplex MCI(2)III(2)IV(2)).

It localises to the mitochondrion inner membrane. It functions in the pathway energy metabolism; oxidative phosphorylation. Component of the cytochrome c oxidase, the last enzyme in the mitochondrial electron transport chain which drives oxidative phosphorylation. The respiratory chain contains 3 multisubunit complexes succinate dehydrogenase (complex II, CII), ubiquinol-cytochrome c oxidoreductase (cytochrome b-c1 complex, complex III, CIII) and cytochrome c oxidase (complex IV, CIV), that cooperate to transfer electrons derived from NADH and succinate to molecular oxygen, creating an electrochemical gradient over the inner membrane that drives transmembrane transport and the ATP synthase. Cytochrome c oxidase is the component of the respiratory chain that catalyzes the reduction of oxygen to water. Electrons originating from reduced cytochrome c in the intermembrane space (IMS) are transferred via the dinuclear copper A center (CU(A)) of subunit 2 and heme A of subunit 1 to the active site in subunit 1, a binuclear center (BNC) formed by heme A3 and copper B (CU(B)). The BNC reduces molecular oxygen to 2 water molecules using 4 electrons from cytochrome c in the IMS and 4 protons from the mitochondrial matrix. This is Cytochrome c oxidase subunit 6C (COX6C) from Saimiri sciureus (Common squirrel monkey).